Reading from the N-terminus, the 562-residue chain is Dihydroxy-acid dehydratase (562 aa).

Asp-80 provides a ligand contact to Mg(2+). Cys-121 contacts [2Fe-2S] cluster. Mg(2+) contacts are provided by Asp-122 and Lys-123. Lys-123 is modified (N6-carboxylysine). Cys-194 contributes to the [2Fe-2S] cluster binding site. Glu-446 provides a ligand contact to Mg(2+). Ser-472 serves as the catalytic Proton acceptor.

Belongs to the IlvD/Edd family. In terms of assembly, homodimer. [2Fe-2S] cluster is required as a cofactor. Requires Mg(2+) as cofactor.

It carries out the reaction (2R)-2,3-dihydroxy-3-methylbutanoate = 3-methyl-2-oxobutanoate + H2O. The enzyme catalyses (2R,3R)-2,3-dihydroxy-3-methylpentanoate = (S)-3-methyl-2-oxopentanoate + H2O. It participates in amino-acid biosynthesis; L-isoleucine biosynthesis; L-isoleucine from 2-oxobutanoate: step 3/4. The protein operates within amino-acid biosynthesis; L-valine biosynthesis; L-valine from pyruvate: step 3/4. Functionally, functions in the biosynthesis of branched-chain amino acids. Catalyzes the dehydration of (2R,3R)-2,3-dihydroxy-3-methylpentanoate (2,3-dihydroxy-3-methylvalerate) into 2-oxo-3-methylpentanoate (2-oxo-3-methylvalerate) and of (2R)-2,3-dihydroxy-3-methylbutanoate (2,3-dihydroxyisovalerate) into 2-oxo-3-methylbutanoate (2-oxoisovalerate), the penultimate precursor to L-isoleucine and L-valine, respectively. The protein is Dihydroxy-acid dehydratase of Staphylococcus haemolyticus (strain JCSC1435).